Reading from the N-terminus, the 320-residue chain is Nuclease (320 aa).

H155 acts as the Proton acceptor in catalysis. Residue N187 coordinates Mg(2+). N204 carries N-linked (GlcNAc...) asparagine glycosylation. C312 and C317 are disulfide-bonded.

The protein belongs to the DNA/RNA non-specific endonuclease family. Homodimer; as a result of non-covalent interactions and not through the disulfide linkages between the two monomers. Mg(2+) is required as a cofactor. Requires Mn(2+) as cofactor. Glycosylated.

The protein localises to the secreted. In terms of biological role, this enzyme has both RNase and DNase activity. In Syncephalastrum racemosum (Filamentous fungus), this protein is Nuclease.